Consider the following 539-residue polypeptide: Zinc finger and BTB domain-containing protein 7B (539 aa).

Positions Cys34–Ser115 constitute a BTB domain. A Phosphoserine modification is found at Ser150. Residues Ala171–Asp308 form a disordered region. A compositionally biased stretch (pro residues) spans Pro182–Pro196. Residues Val197–Lys206 are compositionally biased toward basic residues. N6-acetyllysine; by EP300; alternate is present on residues Lys206 and Lys212. Residues Lys206 and Lys212 each participate in a glycyl lysine isopeptide (Lys-Gly) (interchain with G-Cter in ubiquitin); alternate cross-link. A compositionally biased stretch (acidic residues) spans Tyr273–Leu282. At Lys335 the chain carries N6-acetyllysine; by EP300; alternate. Lys335 participates in a covalent cross-link: Glycyl lysine isopeptide (Lys-Gly) (interchain with G-Cter in ubiquitin); alternate. Positions Met344–Arg400 are required for interaction with and acetylation by EP300. The C2H2-type 1 zinc-finger motif lies at Gln346 to His368. The residue at position 369 (Thr369) is a Phosphothreonine. 2 consecutive C2H2-type zinc fingers follow at residues Phe374–His396 and Tyr402–His424. Residues Tyr430–Cys454 form a C2H2-type 4; atypical zinc finger. 2 disordered regions span residues Arg458 to Leu486 and Phe501 to Ser539. A compositionally biased stretch (pro residues) spans Thr508–Pro517.

Homodimerizes. Interacts with NCL, NEDD4 and YBX1. Interacts with HNRNPU (via RNA-binding RGG-box region); the interaction facilitates the recruitment of long non-coding RNA Blnc1 by ZBTB7B. Interacts with HDAC4 and HDAC5; the interaction allows the recruitment of HDAC4 and HDAC5 on CD8 loci for deacetylation and possible inhibition of CD8 genes expression. Post-translationally, acetylated directly and specifically by EP300. EP300-mediated acetylation of Lys-206, Lys-212 and Lys-335 stabilizes the protein by antagonizing ubiquitin conjugation. Ubiquitinated, leading to proteasomal degradation. Competes with acetylation on Lys-206, Lys-212 and Lys-335.

It localises to the nucleus. In terms of biological role, transcription regulator that acts as a key regulator of lineage commitment of immature T-cell precursors. Exerts distinct biological functions in the mammary epithelial cells and T cells in a tissue-specific manner. Necessary and sufficient for commitment of CD4 lineage, while its absence causes CD8 commitment. Development of immature T-cell precursors (thymocytes) to either the CD4 helper or CD8 killer T-cell lineages correlates precisely with their T-cell receptor specificity for major histocompatibility complex class II or class I molecules, respectively. Cross-antagonism between ZBTB7B and CBF complexes are determinative to CD4 versus CD8 cell fate decision. Suppresses RUNX3 expression and imposes CD4+ lineage fate by inducing the SOCS suppressors of cytokine signaling. induces, as a transcriptional activator, SOCS genes expression which represses RUNX3 expression and promotes the CD4+ lineage fate. During CD4 lineage commitment, associates with multiple sites at the CD8 locus, acting as a negative regulator of the CD8 promoter and enhancers by epigenetic silencing through the recruitment of class II histone deacetylases, such as HDAC4 and HDAC5, to these loci. Regulates the development of IL17-producing CD1d-restricted naural killer (NK) T cells. Also functions as an important metabolic regulator in the lactating mammary glands. Critical feed-forward regulator of insulin signaling in mammary gland lactation, directly regulates expression of insulin receptor substrate-1 (IRS-1) and insulin-induced Akt-mTOR-SREBP signaling. Transcriptional repressor of the collagen COL1A1 and COL1A2 genes. May also function as a repressor of fibronectin and possibly other extracellular matrix genes. Potent driver of brown fat development, thermogenesis and cold-induced beige fat formation. Recruits the brown fat lncRNA 1 (Blnc1):HNRNPU ribonucleoprotein complex to activate thermogenic gene expression in brown and beige adipocytes. This chain is Zinc finger and BTB domain-containing protein 7B, found in Homo sapiens (Human).